An 84-amino-acid chain; its full sequence is Large ribosomal subunit protein bL27 (84 aa).

The interval 1-22 (MAHKKAGGSTRNGRDSESKRLG) is disordered.

Belongs to the bacterial ribosomal protein bL27 family.

The polypeptide is Large ribosomal subunit protein bL27 (Shewanella frigidimarina (strain NCIMB 400)).